A 96-amino-acid chain; its full sequence is SAGA-associated factor 11 (96 aa).

The segment at 68-89 (FHCKNCGRDVSANRFAAHLQRC) adopts an SGF11-type zinc-finger fold.

Belongs to the SGF11 family. Component of the 1.8 MDa SAGA transcription coactivator-HAT complex. SAGA is built of 5 distinct domains with specialized functions. Within the SAGA complex, SUS1, SGF11, SGF73 and UBP8 form an additional subcomplex of SAGA called the DUB module (deubiquitination module). Interacts directly with SGF73, SUS1 and UBP8.

Its subcellular location is the nucleus. Functionally, functions as a component of the transcription regulatory histone acetylation (HAT) complex SAGA. At the promoters, SAGA is required for recruitment of the basal transcription machinery. It influences RNA polymerase II transcriptional activity through different activities such as TBP interaction and promoter selectivity, interaction with transcription activators, and chromatin modification through histone acetylation and deubiquitination. SAGA acetylates nucleosomal histone H3 to some extent (to form H3K9ac, H3K14ac, H3K18ac and H3K23ac). SAGA interacts with DNA via upstream activating sequences (UASs). Involved in transcriptional regulation of a subset of SAGA-regulated genes. Within the SAGA complex, participates in a subcomplex, that specifically deubiquitinates histones H2B. The polypeptide is SAGA-associated factor 11 (Vanderwaltozyma polyspora (strain ATCC 22028 / DSM 70294 / BCRC 21397 / CBS 2163 / NBRC 10782 / NRRL Y-8283 / UCD 57-17) (Kluyveromyces polysporus)).